The primary structure comprises 65 residues: Prokaryotic ubiquitin-like protein UBact (65 aa).

Over residues 1–17 (MEVNMPTTEQGQKNKQM) the composition is skewed to polar residues. Residues 1–65 (MEVNMPTTEQ…ARRYRQRTGE (65 aa)) form a disordered region. The segment covering 35-65 (KVEKPNTEEILKRMRKVDPDQARRYRQRTGE) has biased composition (basic and acidic residues). E65 is covalently cross-linked (Isoglutamyl lysine isopeptide (Glu-Lys) (interchain with K-? in acceptor proteins)).

This sequence belongs to the ubiquitin-like protein UBact family.

In terms of biological role, may function as a protein modifier covalently attached to lysine residues of substrate proteins. This may serve to target the modified proteins for degradation by proteasomes. The chain is Prokaryotic ubiquitin-like protein UBact from Methylacidiphilum infernorum (isolate V4) (Methylokorus infernorum (strain V4)).